We begin with the raw amino-acid sequence, 339 residues long: 5-dehydro-2-deoxygluconokinase (339 aa).

The protein belongs to the carbohydrate kinase PfkB family.

It catalyses the reaction 5-dehydro-2-deoxy-D-gluconate + ATP = 6-phospho-5-dehydro-2-deoxy-D-gluconate + ADP + H(+). It participates in polyol metabolism; myo-inositol degradation into acetyl-CoA; acetyl-CoA from myo-inositol: step 5/7. In terms of biological role, catalyzes the phosphorylation of 5-dehydro-2-deoxy-D-gluconate (2-deoxy-5-keto-D-gluconate or DKG) to 6-phospho-5-dehydro-2-deoxy-D-gluconate (DKGP). The polypeptide is 5-dehydro-2-deoxygluconokinase (Clostridium botulinum (strain Eklund 17B / Type B)).